The chain runs to 191 residues: GTP cyclohydrolase 1 (191 aa).

Residues cysteine 80, histidine 83, and cysteine 151 each coordinate Zn(2+).

This sequence belongs to the GTP cyclohydrolase I family. Toroid-shaped homodecamer, composed of two pentamers of five dimers.

The catalysed reaction is GTP + H2O = 7,8-dihydroneopterin 3'-triphosphate + formate + H(+). It functions in the pathway cofactor biosynthesis; 7,8-dihydroneopterin triphosphate biosynthesis; 7,8-dihydroneopterin triphosphate from GTP: step 1/1. The sequence is that of GTP cyclohydrolase 1 from Nitrosospira multiformis (strain ATCC 25196 / NCIMB 11849 / C 71).